The sequence spans 232 residues: Putative B3 domain-containing protein Os11g0242900 (232 aa).

The segment at residues Met1–Lys51 is a DNA-binding region (TF-B3 1). Residues Ser92–Thr121 form a disordered region. The span at Ser95–Ser107 shows a compositional bias: basic and acidic residues. The segment covering Met108 to Thr121 has biased composition (polar residues). The segment at residues Asp140–Leu232 is a DNA-binding region (TF-B3 2).

Its subcellular location is the nucleus. This Oryza sativa subsp. japonica (Rice) protein is Putative B3 domain-containing protein Os11g0242900.